The sequence spans 416 residues: Serine hydroxymethyltransferase (416 aa).

(6S)-5,6,7,8-tetrahydrofolate is bound by residues leucine 121 and 125–127; that span reads GHL. Lysine 230 bears the N6-(pyridoxal phosphate)lysine mark.

This sequence belongs to the SHMT family. In terms of assembly, homodimer. Pyridoxal 5'-phosphate serves as cofactor.

It localises to the cytoplasm. The enzyme catalyses (6R)-5,10-methylene-5,6,7,8-tetrahydrofolate + glycine + H2O = (6S)-5,6,7,8-tetrahydrofolate + L-serine. It participates in one-carbon metabolism; tetrahydrofolate interconversion. The protein operates within amino-acid biosynthesis; glycine biosynthesis; glycine from L-serine: step 1/1. Its function is as follows. Catalyzes the reversible interconversion of serine and glycine with tetrahydrofolate (THF) serving as the one-carbon carrier. This reaction serves as the major source of one-carbon groups required for the biosynthesis of purines, thymidylate, methionine, and other important biomolecules. Also exhibits THF-independent aldolase activity toward beta-hydroxyamino acids, producing glycine and aldehydes, via a retro-aldol mechanism. The sequence is that of Serine hydroxymethyltransferase from Nitrosospira multiformis (strain ATCC 25196 / NCIMB 11849 / C 71).